A 429-amino-acid polypeptide reads, in one-letter code: Adenylosuccinate synthetase (429 aa).

GTP is bound by residues 12–18 (GDEGKGK) and 40–42 (GHT). D13 serves as the catalytic Proton acceptor. Mg(2+)-binding residues include D13 and G40. IMP is bound by residues 13–16 (DEGK), 38–41 (NAGH), T128, R142, Q223, T238, and R302. H41 serves as the catalytic Proton donor. 298–304 (VNTGRPR) serves as a coordination point for substrate. Residues R304, 330–332 (KLD), and 412–414 (GVG) each bind GTP.

This sequence belongs to the adenylosuccinate synthetase family. In terms of assembly, homodimer. Mg(2+) serves as cofactor.

It localises to the cytoplasm. It carries out the reaction IMP + L-aspartate + GTP = N(6)-(1,2-dicarboxyethyl)-AMP + GDP + phosphate + 2 H(+). It functions in the pathway purine metabolism; AMP biosynthesis via de novo pathway; AMP from IMP: step 1/2. Functionally, plays an important role in the de novo pathway of purine nucleotide biosynthesis. Catalyzes the first committed step in the biosynthesis of AMP from IMP. The polypeptide is Adenylosuccinate synthetase (Paenarthrobacter aurescens (strain TC1)).